The following is a 130-amino-acid chain: Hydrogenase maturation factor HypA (130 aa).

H2 contacts Ni(2+). Residues C74, C77, C90, and C93 each contribute to the Zn(2+) site.

This sequence belongs to the HypA/HybF family.

Its function is as follows. Involved in the maturation of [NiFe] hydrogenases. Required for nickel insertion into the metal center of the hydrogenase. The sequence is that of Hydrogenase maturation factor HypA from Desulfatibacillum aliphaticivorans.